Reading from the N-terminus, the 449-residue chain is Elongation factor 1-alpha 1 (449 aa).

One can recognise a tr-type G domain in the interval 5–230 (KFHINIVVIG…DQINEPKRPS (226 aa)). A G1 region spans residues 14–21 (GHVDSGKS). 14-21 (GHVDSGKS) is a GTP binding site. Lys-55 carries the N6,N6-dimethyllysine modification. The tract at residues 70 to 74 (GITID) is G2. N6,N6,N6-trimethyllysine is present on Lys-79. The segment at 91–94 (DAPG) is G3. Residues 91-95 (DAPGH) and 153-156 (NKMD) contribute to the GTP site. The G4 stretch occupies residues 153–156 (NKMD). Lys-187 carries the N6,N6,N6-trimethyllysine modification. A G5 region spans residues 194–196 (SGF). Lys-261 carries the N6-methyllysine modification. Residues Lys-306 and Lys-396 each carry the N6,N6,N6-trimethyllysine modification. Residues Lys-438 and Lys-441 each participate in a glycyl lysine isopeptide (Lys-Gly) (interchain with G-Cter in ubiquitin) cross-link.

Belongs to the TRAFAC class translation factor GTPase superfamily. Classic translation factor GTPase family. EF-Tu/EF-1A subfamily.

It is found in the cytoplasm. In terms of biological role, this protein promotes the GTP-dependent binding of aminoacyl-tRNA to the A-site of ribosomes during protein biosynthesis. The sequence is that of Elongation factor 1-alpha 1 (A1) from Arabidopsis thaliana (Mouse-ear cress).